The following is a 398-amino-acid chain: Elongation factor Tu (398 aa).

The tr-type G domain occupies 10–207 (KPHVNIGTIG…TVDEYIPEPE (198 aa)). The interval 19–26 (GHVDHGKT) is G1. 19-26 (GHVDHGKT) provides a ligand contact to GTP. A Mg(2+)-binding site is contributed by Thr26. The interval 63 to 67 (GITIN) is G2. The interval 84–87 (DAPG) is G3. GTP is bound by residues 84–88 (DAPGH) and 139–142 (NKVD). Residues 139 to 142 (NKVD) are G4. A G5 region spans residues 177 to 179 (SAL).

The protein belongs to the TRAFAC class translation factor GTPase superfamily. Classic translation factor GTPase family. EF-Tu/EF-1A subfamily. Monomer.

The protein resides in the cytoplasm. The catalysed reaction is GTP + H2O = GDP + phosphate + H(+). GTP hydrolase that promotes the GTP-dependent binding of aminoacyl-tRNA to the A-site of ribosomes during protein biosynthesis. The protein is Elongation factor Tu of Streptococcus pyogenes serotype M49 (strain NZ131).